Here is a 509-residue protein sequence, read N- to C-terminus: MEEIQRYLQPDRSQQHNFLYPLIFQEYIYALAHDHGLNRNRSILLENPGYDNKFSFLIVKRLITRMYQQNHFLISTNDSNKNSFLGCNKSLYSQMISEGFAFIAEIPFSLRLMSSLSSFEGKNIFKSHNLRSIHSTFPFLEDNFSHLNYVLDILIPYPVHLEILVQTLRYWVKDASSLHLLRFFLHEYWNLNSLITSKKPGYSFSKKNQRFFFFLYNSYGYECESTFVFLRNQSSHLRSTSFGALLERIYFYGKIERLVEVFAKDFQVTLWLFKDPFMHYVRYQGKSIMASKGTFLLMNKWKFYLVNFWQCHFSLCFHTGRIHINQLSNHSRDFMGYLSSVRLNPSMVRSQMLENSFLINNAIKKFDILVPIIPLIGSLAKENFCTVLGHPISKPVWSDLSDSDIIDRFGRICRNIFHYYSGSSKKKTLYRIKYILRLSCARTLARKHKSTVRTFLKRSGSELLEEFLTSEEQVLSLTFPRASSSLWGVYRSRIWYLDIFCINDLANSQ.

This sequence belongs to the intron maturase 2 family. MatK subfamily.

Its subcellular location is the plastid. It localises to the chloroplast. Its function is as follows. Usually encoded in the trnK tRNA gene intron. Probably assists in splicing its own and other chloroplast group II introns. The polypeptide is Maturase K (Anthocercis viscosa (Sticky tailflower)).